The following is a 508-amino-acid chain: NAD(P)H-quinone oxidoreductase subunit 2 B, chloroplastic (508 aa).

The next 13 membrane-spanning stretches (helical) occupy residues 24-44, 59-79, 99-119, 124-144, 149-169, 184-204, 227-247, 295-315, 323-343, 354-374, 395-415, 418-438, and 482-502; these read LLLFDGSLIFPECILIFGLIL, WLYFISSTSLVMSITALLFRW, IFQFLILLCSTLCIPLSVEYI, MAITEFLLFVLTATLGGMFLC, FITIFVAPECFSLCSYLLSGY, LLMGGASSSILVHGFSWLYGL, PGISIALIFITVGIGFKLSPA, WHLLLEILAILSMILGNLIAI, MLAYSSIGQIGYVIIGIIVGD, YMLFYISMNLGAFACIVLFGL, ALSLALCLLSLGGLPPLAGFF, LYLFWCGWQAGLYFLVFIGLL, and MIVCVIASTIPGISMNPIIAI.

This sequence belongs to the complex I subunit 2 family. NDH is composed of at least 16 different subunits, 5 of which are encoded in the nucleus.

The protein localises to the plastid. It localises to the chloroplast thylakoid membrane. It catalyses the reaction a plastoquinone + NADH + (n+1) H(+)(in) = a plastoquinol + NAD(+) + n H(+)(out). The enzyme catalyses a plastoquinone + NADPH + (n+1) H(+)(in) = a plastoquinol + NADP(+) + n H(+)(out). Its function is as follows. NDH shuttles electrons from NAD(P)H:plastoquinone, via FMN and iron-sulfur (Fe-S) centers, to quinones in the photosynthetic chain and possibly in a chloroplast respiratory chain. The immediate electron acceptor for the enzyme in this species is believed to be plastoquinone. Couples the redox reaction to proton translocation, and thus conserves the redox energy in a proton gradient. This chain is NAD(P)H-quinone oxidoreductase subunit 2 B, chloroplastic, found in Ipomoea purpurea (Common morning glory).